The chain runs to 736 residues: Replication restart protein PriA (736 aa).

In terms of domain architecture, Helicase ATP-binding spans aspartate 230–phenylalanine 396. Position 243-250 (glycine 243–threonine 250) interacts with ATP. The DEAH box signature appears at aspartate 339–histidine 342. Residues cysteine 452, cysteine 455, cysteine 461, cysteine 464, cysteine 479, cysteine 482, cysteine 492, and cysteine 495 each coordinate Zn(2+). Positions glycine 487 to glycine 643 constitute a Helicase C-terminal domain.

It belongs to the helicase family. PriA subfamily. In terms of assembly, component of the replication restart primosome. The cofactor is Zn(2+).

The catalysed reaction is Couples ATP hydrolysis with the unwinding of duplex DNA by translocating in the 3'-5' direction.. It catalyses the reaction ATP + H2O = ADP + phosphate + H(+). Initiates the restart of stalled replication forks, which reloads the replicative helicase on sites other than the origin of replication. Recognizes and binds to abandoned replication forks and remodels them to uncover a helicase loading site. Promotes assembly of the primosome at these replication forks. This chain is Replication restart protein PriA, found in Thermotoga maritima (strain ATCC 43589 / DSM 3109 / JCM 10099 / NBRC 100826 / MSB8).